We begin with the raw amino-acid sequence, 599 residues long: Glucose-6-phosphate 1-dehydrogenase 3, chloroplastic (599 aa).

A compositionally biased stretch (low complexity) spans 1–18; sequence MSSLSCPTYRSRTSSSSP. Residues 1–23 are disordered; that stretch reads MSSLSCPTYRSRTSSSSPFLSNH. Residues 1-66 constitute a chloroplast transit peptide; it reads MSSLSCPTYR…RSQRRSVQSS (66 aa). An N-acetylvaline modification is found at V67. NADP(+)-binding positions include 119 to 126 and R153; that span reads GASGDLAK. Residues C171 and C179 are joined by a disulfide bond. K256 provides a ligand contact to NADP(+). D-glucose 6-phosphate-binding positions include K256, 286–290, E324, and D343; that span reads HYLGK. H348 (proton acceptor) is an active-site residue. Position 441 (K441) interacts with NADP(+). 2 residues coordinate D-glucose 6-phosphate: K444 and R449. NADP(+) is bound by residues R454 and R483. Q485 lines the D-glucose 6-phosphate pocket. Residues 491-493 and R576 each bind NADP(+); that span reads YLK.

The protein belongs to the glucose-6-phosphate dehydrogenase family. As to quaternary structure, forms homodimer. Interacts with G6PD1. Expressed in roots, flowers and siliques.

It is found in the plastid. It localises to the chloroplast stroma. The enzyme catalyses D-glucose 6-phosphate + NADP(+) = 6-phospho-D-glucono-1,5-lactone + NADPH + H(+). Its pathway is carbohydrate degradation; pentose phosphate pathway; D-ribulose 5-phosphate from D-glucose 6-phosphate (oxidative stage): step 1/3. With respect to regulation, regulated by metabolites. Post-translationally inactivated by cysteine-mediated redox modification via the ferredoxin-thioredoxin system in the light and this avoids futile cycles with photosynthetic CO2 fixation. Functionally, catalyzes the rate-limiting step of the oxidative pentose-phosphate pathway, which represents a route for the dissimilation of carbohydrates besides glycolysis. The main function of this enzyme is to provide reducing power (NADPH) and pentose phosphates for fatty acid and nucleic acid synthesis which are involved in membrane synthesis and cell division. This chain is Glucose-6-phosphate 1-dehydrogenase 3, chloroplastic, found in Arabidopsis thaliana (Mouse-ear cress).